The following is a 444-amino-acid chain: Phosphoglucosamine mutase (444 aa).

S102 functions as the Phosphoserine intermediate in the catalytic mechanism. Positions 102, 241, 243, and 245 each coordinate Mg(2+). S102 is modified (phosphoserine).

It belongs to the phosphohexose mutase family. Mg(2+) serves as cofactor. In terms of processing, activated by phosphorylation.

The catalysed reaction is alpha-D-glucosamine 1-phosphate = D-glucosamine 6-phosphate. Its function is as follows. Catalyzes the conversion of glucosamine-6-phosphate to glucosamine-1-phosphate. This is Phosphoglucosamine mutase from Actinobacillus succinogenes (strain ATCC 55618 / DSM 22257 / CCUG 43843 / 130Z).